Consider the following 791-residue polypeptide: GDH/6PGL endoplasmic bifunctional protein (791 aa).

Residues 1-19 (MWNMLIVAMCLALLGCLQA) form the signal peptide. Glutamine 20 carries the pyrrolidone carboxylic acid modification. Residues 20 to 526 (QELQGHVSII…SGRLFFSQQQ (507 aa)) form a hexose-6-phosphate dehydrogenase region. NADP(+) contacts are provided by residues 32–39 (GATGDLAK) and tyrosine 149. N-linked (GlcNAc...) asparagine glycosylation is present at asparagine 157. Residue lysine 174 participates in NADP(+) binding. Residues lysine 174, 204–208 (HYLGK), glutamate 243, and aspartate 262 each bind D-glucose 6-phosphate. Lysine 208 carries the post-translational modification N6-succinyllysine. Histidine 267 serves as the catalytic Proton acceptor. N-linked (GlcNAc...) asparagine glycosylation occurs at asparagine 282. Residues lysine 360 and arginine 365 each coordinate D-glucose 6-phosphate. Arginine 370 provides a ligand contact to NADP(+). Residues 527-540 (PEQLVPGPGPAPMP) form a linker region. Residues 541 to 791 (SDFQVLRAKY…WYMDYDAFLG (251 aa)) are 6-phosphogluconolactonase. Position 617 (tryptophan 617) interacts with NADP(+). Asparagine 683 carries an N-linked (GlcNAc...) asparagine glycan.

This sequence in the N-terminal section; belongs to the glucose-6-phosphate dehydrogenase family. The protein in the C-terminal section; belongs to the glucosamine/galactosamine-6-phosphate isomerase family. 6-phosphogluconolactonase subfamily. In terms of assembly, homodimer. Present in most tissues examined, strongest in liver.

The protein localises to the endoplasmic reticulum lumen. The enzyme catalyses D-glucose 6-phosphate + NADP(+) = 6-phospho-D-glucono-1,5-lactone + NADPH + H(+). It carries out the reaction D-glucose 6-phosphate + NAD(+) = 6-phospho-D-glucono-1,5-lactone + NADH + H(+). It catalyses the reaction 6-phospho-D-glucono-1,5-lactone + H2O = 6-phospho-D-gluconate + H(+). The catalysed reaction is 2-deoxy-D-glucose 6-phosphate + NAD(+) = 2-deoxy-6-phospho-D-glucono-1,5-lactone + NADH + H(+). The enzyme catalyses 2-deoxy-D-glucose 6-phosphate + NADP(+) = 2-deoxy-6-phospho-D-glucono-1,5-lactone + NADPH + H(+). It carries out the reaction D-galactose 6-phosphate + NADP(+) = 6-phospho-D-galactono-1,5-lactone + NADPH + H(+). It catalyses the reaction D-galactose 6-phosphate + NAD(+) = 6-phospho-D-galactono-1,5-lactone + NADH + H(+). The catalysed reaction is D-glucosamine 6-phosphate + NADP(+) = 2-amino-2-deoxy-6-phospho-D-glucono-1,5-lactone + NADPH + 2 H(+). The enzyme catalyses D-glucose + NAD(+) = D-glucono-1,5-lactone + NADH + H(+). It carries out the reaction D-glucose + NADP(+) = D-glucono-1,5-lactone + NADPH + H(+). It catalyses the reaction D-glucose 6-sulfate + NADP(+) = 6-sulfo-D-glucono-1,5-lactone + NADPH + H(+). It functions in the pathway carbohydrate degradation; pentose phosphate pathway; D-ribulose 5-phosphate from D-glucose 6-phosphate (oxidative stage): step 1/3. Its pathway is carbohydrate degradation; pentose phosphate pathway; D-ribulose 5-phosphate from D-glucose 6-phosphate (oxidative stage): step 2/3. The protein operates within carbohydrate degradation; pentose phosphate pathway; D-ribulose 5-phosphate from D-glucose 6-phosphate (oxidative stage). In terms of biological role, bifunctional enzyme localized in the lumen of the endoplasmic reticulum that catalyzes the first two steps of the oxidative branch of the pentose phosphate pathway/shunt, an alternative to glycolysis and a major source of reducing power and metabolic intermediates for biosynthetic processes. Has a hexose-6-phosphate dehydrogenase activity, with broad substrate specificity compared to glucose-6-phosphate 1-dehydrogenase/G6PD, and catalyzes the first step of the pentose phosphate pathway. In addition, acts as a 6-phosphogluconolactonase and catalyzes the second step of the pentose phosphate pathway. May have a dehydrogenase activity for alternative substrates including glucosamine 6-phosphate and glucose 6-sulfate. The main function of this enzyme is to provide reducing equivalents such as NADPH to maintain the adequate levels of reductive cofactors in the oxidizing environment of the endoplasmic reticulum. By producing NADPH that is needed by reductases of the lumen of the endoplasmic reticulum like corticosteroid 11-beta-dehydrogenase isozyme 1/HSD11B1, indirectly regulates their activity. This Homo sapiens (Human) protein is GDH/6PGL endoplasmic bifunctional protein.